The primary structure comprises 112 residues: DNA-binding protein Memar_1972 (112 aa).

Positions 14-35 are disordered; that stretch reads MEQMQRQAMDQQGMEEEAARQQ.

The protein belongs to the PDCD5 family.

This is DNA-binding protein Memar_1972 from Methanoculleus marisnigri (strain ATCC 35101 / DSM 1498 / JR1).